The primary structure comprises 65 residues: MSDKCGNCDCADKSQCVKKGTSYGVVIVDAEKSHFEMAEEVGYEENDGKCKCTTGCSCAGCNCGK.

This sequence belongs to the metallothionein superfamily. Type 15 family. In terms of tissue distribution, expressed in leaves and rachis.

Metallothioneins have a high content of cysteine residues that bind various heavy metals. The protein is Metallothionein-like protein 3B (MT3B) of Oryza sativa subsp. japonica (Rice).